Here is a 476-residue protein sequence, read N- to C-terminus: Protein transport protein Sec61 subunit alpha isoform 1 (476 aa).

Residues 1-33 (MAIKFLEVIKPFCVILPEIQKPERKIQFKEKVL) lie on the Cytoplasmic side of the membrane. The helical transmembrane segment at 34–53 (WTAITLFIFLVCCQIPLFGI) threads the bilayer. Over 54-76 (MSSDSADPFYWMRVILASNRGTL) the chain is Lumenal. The helical transmembrane segment at 77–96 (MELGISPIVTSGLIMQLLAG) threads the bilayer. The Cytoplasmic segment spans residues 97 to 117 (AKIIEVGDTPKDRALFNGAQK). A helical membrane pass occupies residues 118-138 (LFGMIITIGQSIVYVMTGMYG). Over 139-144 (DPSEMG) the chain is Lumenal. A helical membrane pass occupies residues 145–165 (AGICLLITIQLFVAGLIVLLL). Residues 166–172 (DELLQKG) are Cytoplasmic-facing. The chain crosses the membrane as a helical span at residues 173–193 (YGLGSGISLFIATNICETIVW). Residues 194 to 240 (KAFSPTTVNTGRGMEFEGAIIALFHLLATRTDKVRALREAFYRQNLP) are Lumenal-facing. The chain crosses the membrane as a helical span at residues 241–261 (NLMNLIATIFVFAVVIYFQGF). At 262–288 (RVDLPIKSARYRGQYNTYPIKLFYTSN) the chain is on the cytoplasmic side. Residues 289–309 (IPIILQSALVSNLYVISQMLS) form a helical membrane-spanning segment. The Lumenal portion of the chain corresponds to 310–354 (ARFSGNLLVSLLGTWSDTSSGGPARAYPVGGLCYYLSPPESFGSV). The helical transmembrane segment at 355–375 (LEDPVHAVVYIVFMLGSCAFF) threads the bilayer. Residues 376–420 (SKTWIEVSGSSAKDVAKQLKEQQMVMRGHRETSMVHELNRYIPTA) are Cytoplasmic-facing. A helical transmembrane segment spans residues 421–441 (AAFGGLCIGALSVLADFLGAI). Over 442-445 (GSGT) the chain is Lumenal. Residues 446–462 (GILLAVTIIYQYFEIFV) form a helical membrane-spanning segment. At 463-476 (KEQSEVGSMGALLF) the chain is on the cytoplasmic side.

Belongs to the SecY/SEC61-alpha family. The SEC61 channel-forming translocon complex consists of channel-forming core components SEC61A1, SEC61B and SEC61G and different auxiliary components such as SEC62 and SEC63. The SEC61 channel associates with the multi-pass translocon (MPT) complex. In terms of tissue distribution, expressed in proximal and distal tubules in kidney (at protein level).

It localises to the endoplasmic reticulum membrane. In terms of biological role, component of SEC61 channel-forming translocon complex that mediates transport of signal peptide-containing precursor polypeptides across the endoplasmic reticulum (ER). Forms a ribosome receptor and a gated pore in the ER membrane, both functions required for cotranslational translocation of nascent polypeptides. May cooperate with auxiliary protein SEC62, SEC63 and HSPA5/BiP to enable post-translational transport of small presecretory proteins. The SEC61 channel is also involved in ER membrane insertion of transmembrane proteins: it mediates membrane insertion of the first few transmembrane segments of proteins, while insertion of subsequent transmembrane regions of multi-pass membrane proteins is mediated by the multi-pass translocon (MPT) complex. The SEC61 channel cooperates with the translocating protein TRAM1 to import nascent proteins into the ER. Controls the passive efflux of calcium ions from the ER lumen to the cytosol through SEC61 channel, contributing to the maintenance of cellular calcium homeostasis. Plays a critical role in nephrogenesis, specifically at pronephros stage. This is Protein transport protein Sec61 subunit alpha isoform 1 (SEC61A1) from Homo sapiens (Human).